The sequence spans 99 residues: Integration host factor subunit alpha (99 aa).

A disordered region spans residues 49–72 (FGNFDLRDKNQRPGRNPKTGEDIP).

Belongs to the bacterial histone-like protein family. Heterodimer of an alpha and a beta chain.

In terms of biological role, this protein is one of the two subunits of integration host factor, a specific DNA-binding protein that functions in genetic recombination as well as in transcriptional and translational control. This Escherichia coli O9:H4 (strain HS) protein is Integration host factor subunit alpha.